Here is a 385-residue protein sequence, read N- to C-terminus: MKEGKDGFVRADQIDLKSLDEQLERHLSRALTLEKNKKKDEEDTTAVAIGGSASSSPVTLNGGGFVGKRKQRLEWEIDPSKLIIKTVLARGTFGTVHRGIYDGQDVAVKLLDWGEEGHRSEAEIVSLRADFAQEVAVWHKLDHPNVTKFIGATMGASGLQLQTESGPLAMPNNICCVVVEYLPGGALKSYLIKNRRRKLTFKIVVQLALDLARGLSYLHSQKIVHRDVKTENMLLDKTRTVKIADFGVARVEASNPNDMTGETGTLGYMAPEVLNGNPYNRKCDVYSFGICLWEIYCCDMPYPDLTFSEVTSAVVRQNLRPDIPRCCPSALAAVMKRCWDANPDKRPEMDEVVPMLESIDTTKGGGMIPNDQQQGCLCFRRKRGP.

Positions 82-356 (LIIKTVLARG…PEMDEVVPML (275 aa)) constitute a Protein kinase domain. ATP-binding positions include 88 to 96 (LARGTFGTV) and K109. The Proton acceptor role is filled by D227.

Belongs to the protein kinase superfamily. Ser/Thr protein kinase family. Binds to CBC1. Associates with PHOT1, PHOT2, BLUS1 and PM H(+)-ATPase (e.g. AHA1). In terms of processing, autophosphorylated. Phosphorylated by HT1 in response to low CO(2) concentrations. In terms of tissue distribution, expressed in guard cells.

It is found in the cytoplasm. It localises to the cytosol. It catalyses the reaction L-seryl-[protein] + ATP = O-phospho-L-seryl-[protein] + ADP + H(+). The catalysed reaction is L-threonyl-[protein] + ATP = O-phospho-L-threonyl-[protein] + ADP + H(+). In terms of biological role, serine/threonine protein kinase that phosphorylates proteins on serine and threonine residues. Collectively with CBC1, acts as a negative regulator of stomatal opening, probably via the inhibition of plasma membrane-type ATPases (AHA1 and AHA2) activity in guard cells, but in an abscisic acid (ABA)-independent manner. However, at low concentrations of CO(2), together with CBC1, stimulates stomatal opening via the inhibition of S-type anion channels in response to blue light (BL) and red light (RL), thus being a key component to maximize photosynthesis in the light under low CO(2) conditions. Required for temperature decrease in leaves. Downstream target of HIGH LEAF TEMPERATURE1 (HT1) during low CO(2)-induced stomatal opening. This Arabidopsis thaliana (Mouse-ear cress) protein is Serine/threonine-protein kinase 52.